The chain runs to 215 residues: Orotate phosphoribosyltransferase (215 aa).

Position 26 (lysine 26) interacts with 5-phospho-alpha-D-ribose 1-diphosphate. 34-35 (FF) provides a ligand contact to orotate. Residues 72 to 73 (YK), arginine 99, lysine 100, lysine 103, histidine 105, and 124 to 132 (DDVITAGTA) contribute to the 5-phospho-alpha-D-ribose 1-diphosphate site. The orotate site is built by threonine 128 and arginine 156.

Belongs to the purine/pyrimidine phosphoribosyltransferase family. PyrE subfamily. In terms of assembly, homodimer. The cofactor is Mg(2+).

It catalyses the reaction orotidine 5'-phosphate + diphosphate = orotate + 5-phospho-alpha-D-ribose 1-diphosphate. Its pathway is pyrimidine metabolism; UMP biosynthesis via de novo pathway; UMP from orotate: step 1/2. In terms of biological role, catalyzes the transfer of a ribosyl phosphate group from 5-phosphoribose 1-diphosphate to orotate, leading to the formation of orotidine monophosphate (OMP). The sequence is that of Orotate phosphoribosyltransferase from Shewanella oneidensis (strain ATCC 700550 / JCM 31522 / CIP 106686 / LMG 19005 / NCIMB 14063 / MR-1).